The following is a 588-amino-acid chain: Adenine deaminase (588 aa).

This sequence belongs to the metallo-dependent hydrolases superfamily. Adenine deaminase family. Homodimer. The cofactor is Mn(2+).

It catalyses the reaction adenine + H2O + H(+) = hypoxanthine + NH4(+). The polypeptide is Adenine deaminase (Escherichia coli O81 (strain ED1a)).